A 379-amino-acid chain; its full sequence is Chaperone protein DnaJ (379 aa).

Residues 5 to 69 enclose the J domain; the sequence is DYYEVLGISK…NKRASYDQFG (65 aa). The segment at 136 to 218 adopts a CR-type zinc-finger fold; sequence GTTKEISIRK…CHGKGTENKT (83 aa). The Zn(2+) site is built by C149, C152, C166, C169, C192, C195, C206, and C209. CXXCXGXG motif repeat units follow at residues 149–156, 166–173, 192–199, and 206–213; these read CETCHGDG, CSYCNGAG, CPKCNGSG, and CPTCHGKG.

This sequence belongs to the DnaJ family. In terms of assembly, homodimer. It depends on Zn(2+) as a cofactor.

It is found in the cytoplasm. In terms of biological role, participates actively in the response to hyperosmotic and heat shock by preventing the aggregation of stress-denatured proteins and by disaggregating proteins, also in an autonomous, DnaK-independent fashion. Unfolded proteins bind initially to DnaJ; upon interaction with the DnaJ-bound protein, DnaK hydrolyzes its bound ATP, resulting in the formation of a stable complex. GrpE releases ADP from DnaK; ATP binding to DnaK triggers the release of the substrate protein, thus completing the reaction cycle. Several rounds of ATP-dependent interactions between DnaJ, DnaK and GrpE are required for fully efficient folding. Also involved, together with DnaK and GrpE, in the DNA replication of plasmids through activation of initiation proteins. This Staphylococcus aureus (strain USA300 / TCH1516) protein is Chaperone protein DnaJ.